The following is a 118-amino-acid chain: Mating-type P-specific polypeptide Pc (118 aa).

A DNA-binding region (HMG box) is located at residues 29–97 (KTTIYKNGFM…VRRQIAKLER (69 aa)).

The protein localises to the nucleus. Mating type proteins are sequence specific DNA-binding proteins that act as master switches in yeast differentiation by controlling gene expression in a cell type-specific fashion. Required for conjugation and efficient meiosis. The protein is Mating-type P-specific polypeptide Pc (mat2-Pc) of Schizosaccharomyces pombe (Fission yeast).